Reading from the N-terminus, the 212-residue chain is Protein YIPF5 homolog (212 aa).

Residues 1 to 79 (MNNNNSFNFI…KKIDSHIMDD (79 aa)) lie on the Cytoplasmic side of the membrane. The helical transmembrane segment at 80-100 (TDLGGPILFGLLLGFSLLMSG) threads the bilayer. Residue lysine 101 is a topological domain, lumenal. A helical transmembrane segment spans residues 102-122 (IQFGYIYGLGLIGCVSMYIVL). The Cytoplasmic segment spans residues 123 to 128 (NLMSEK). A helical membrane pass occupies residues 129 to 149 (GIDIYRVISVLGYCLLPMIFL). At 150–163 (SFTSLIININGMVG) the chain is on the lumenal side. The helical transmembrane segment at 164–186 (YILIGFAIVWSTYSASKMFVKVL) threads the bilayer. Residues 187–191 (SMIDQ) lie on the Cytoplasmic side of the membrane. Residues 192 to 212 (RILVAYPVGLLYTGFALITAF) traverse the membrane as a helical segment.

It belongs to the YIP1 family.

The protein localises to the endoplasmic reticulum membrane. It localises to the golgi apparatus. It is found in the cis-Golgi network membrane. Its function is as follows. Plays a role in transport between endoplasmic reticulum and Golgi. The polypeptide is Protein YIPF5 homolog (yipf5) (Dictyostelium discoideum (Social amoeba)).